Consider the following 156-residue polypeptide: Endogenous retrovirus group K member 21 Pro protein (156 aa).

A Peptidase A2 domain is found at 21–96; that stretch reads FEGLVDTGAD…IPLNLWGRDL (76 aa). The active site involves aspartate 26. Positions 111–156 constitute a G-patch domain; that stretch reads YSPTSQKIMTKMGYIPGKGLGKNEDGIKVPVEAKINQKREGIGYPF.

This sequence belongs to the peptidase A2 family. HERV class-II K(HML-2) subfamily. Active as a homodimer. In terms of processing, autoproteolytically processed at the N-terminus. Expected C-terminal autoprocessing not detected. The sequence shown is that of the processed Pro protein.

The catalysed reaction is Processing at the authentic HIV-1 PR recognition site and release of the mature p17 matrix and the p24 capsid protein, as a result of the cleavage of the -SQNY-|-PIVQ- cleavage site.. Retroviral proteases have roles in the processing of the primary translation products and the maturation of the viral particle. Endogenous Pro proteins may have kept, lost or modified their original function during evolution. The chain is Endogenous retrovirus group K member 21 Pro protein (ERVK-21) from Homo sapiens (Human).